The sequence spans 590 residues: G protein-coupled receptor kinase 5 (590 aa).

Residues 1–185 (MELENIVANT…LERQPVTKNT (185 aa)) are N-terminal. The interaction with calmodulin stretch occupies residues 20–39 (GGKRKGKSKKWKEILKFPHI). The RGS domain maps to 53–171 (YCSLCDKQPI…LDSMFFDRFL (119 aa)). The 263-residue stretch at 186-448 (FRQYRVLGKG…AAEVKRHPFF (263 aa)) folds into the Protein kinase domain. Residues 192–200 (LGKGGFGEV) and K215 contribute to the ATP site. Residue D311 is the Proton acceptor of the active site. Positions 388–395 (RKEKVKRE) match the Nuclear localization signal motif. Residues 449-514 (RNMNFKRLEA…GSVSIPWQNE (66 aa)) form the AGC-kinase C-terminal domain. The residue at position 484 (S484) is a Phosphoserine; by autocatalysis. T485 is modified (phosphothreonine; by autocatalysis). The interval 531–590 (GTLPPDLNRNHPPEPPKKGLLQRLFKRQHQNNSKSSPSSKTSFNHHINSNHVSSNSTGSS) is disordered. Residues 538–547 (NRNHPPEPPK) show a composition bias toward basic and acidic residues. A sufficient for membrane localization region spans residues 546-565 (PKKGLLQRLFKRQHQNNSKS). A compositionally biased stretch (low complexity) spans 563 to 590 (SKSSPSSKTSFNHHINSNHVSSNSTGSS). The residue at position 579 (S579) is a Phosphoserine.

The protein belongs to the protein kinase superfamily. AGC Ser/Thr protein kinase family. GPRK subfamily. As to quaternary structure, interacts with ST13 (via the C-terminus 303-319 AA). Interacts with TP53/p53. Interacts with HTR4 (via C-terminus 330-346 AA); this interaction is promoted by 5-HT (serotonin). Interacts with HDAC5. Interacts with GIT1. Post-translationally, autophosphorylated. Autophosphorylation may play a critical role in the regulation of GRK5 kinase activity. As to expression, highest levels in heart, placenta, lung &gt; skeletal muscle &gt; brain, liver, pancreas &gt; kidney.

It is found in the cytoplasm. The protein localises to the nucleus. Its subcellular location is the cell membrane. The catalysed reaction is [G-protein-coupled receptor] + ATP = [G-protein-coupled receptor]-phosphate + ADP + H(+). Its activity is regulated as follows. Inhibited by calmodulin with an IC(50) of 50 nM. Calmodulin inhibits GRK5 association with receptor and phospholipid. In terms of biological role, serine/threonine kinase that phosphorylates preferentially the activated forms of a variety of G-protein-coupled receptors (GPCRs). Such receptor phosphorylation initiates beta-arrestin-mediated receptor desensitization, internalization, and signaling events leading to their down-regulation. Phosphorylates a variety of GPCRs, including adrenergic receptors, muscarinic acetylcholine receptors (more specifically Gi-coupled M2/M4 subtypes), dopamine receptors and opioid receptors. In addition to GPCRs, also phosphorylates various substrates: Hsc70-interacting protein/ST13, TP53/p53, HDAC5, and arrestin-1/ARRB1. Phosphorylation of ARRB1 by GRK5 inhibits G-protein independent MAPK1/MAPK3 signaling downstream of 5HT4-receptors. Phosphorylation of HDAC5, a repressor of myocyte enhancer factor 2 (MEF2) leading to nuclear export of HDAC5 and allowing MEF2-mediated transcription. Phosphorylation of TP53/p53, a crucial tumor suppressor, inhibits TP53/p53-mediated apoptosis. Phosphorylation of ST13 regulates internalization of the chemokine receptor. Phosphorylates rhodopsin (RHO) (in vitro) and a non G-protein-coupled receptor, LRP6 during Wnt signaling (in vitro). The polypeptide is G protein-coupled receptor kinase 5 (GRK5) (Homo sapiens (Human)).